The sequence spans 199 residues: Protein-methionine-sulfoxide reductase heme-binding subunit MsrQ (199 aa).

The next 4 membrane-spanning stretches (helical) occupy residues 10 to 30 (WLKVCLHLAGFLPLLWLFWAI), 82 to 102 (LWCFVWATLHLTSYALLELGI), 116 to 136 (PYLTLGIISWLVLLALTLTST), and 153 to 173 (VVYLVAILAPIHYLWSVKILS).

It belongs to the MsrQ family. In terms of assembly, heterodimer of a catalytic subunit (MsrP) and a heme-binding subunit (MsrQ). FMN serves as cofactor. The cofactor is heme b.

Its subcellular location is the cell inner membrane. Its function is as follows. Part of the MsrPQ system that repairs oxidized periplasmic proteins containing methionine sulfoxide residues (Met-O), using respiratory chain electrons. Thus protects these proteins from oxidative-stress damage caused by reactive species of oxygen and chlorine generated by the host defense mechanisms. MsrPQ is essential for the maintenance of envelope integrity under bleach stress, rescuing a wide series of structurally unrelated periplasmic proteins from methionine oxidation, including the primary periplasmic chaperone SurA and the lipoprotein Pal. MsrQ provides electrons for reduction to the reductase catalytic subunit MsrP, using the quinone pool of the respiratory chain. The protein is Protein-methionine-sulfoxide reductase heme-binding subunit MsrQ of Salmonella enteritidis PT4 (strain P125109).